A 200-amino-acid chain; its full sequence is Guanylyl cyclase-activating protein 2 (200 aa).

The N-myristoyl glycine moiety is linked to residue glycine 2. EF-hand domains are found at residues 14-31 (GEID…FVME), 53-88 (EASQ…VLRG), 89-124 (TLEH…IYQL), and 141-176 (TPEE…DKWV). Aspartate 66, asparagine 68, aspartate 70, threonine 72, glutamate 77, aspartate 102, aspartate 104, asparagine 106, cysteine 108, glutamate 113, aspartate 154, asparagine 156, aspartate 158, glutamine 160, and glutamate 165 together coordinate Ca(2+).

In terms of processing, the N-terminus is blocked. In terms of tissue distribution, in the retina, it is expressed in cone and rod photoreceptor cells.

The protein resides in the cell membrane. It is found in the photoreceptor inner segment. Its subcellular location is the cell projection. It localises to the cilium. The protein localises to the photoreceptor outer segment. In terms of biological role, stimulates two retinal guanylyl cyclases (GCs) GUCY2D and GUCY2F when free calcium ions concentration is low, and inhibits GUCY2D and GUCY2F when free calcium ions concentration is elevated. This Ca(2+)-sensitive regulation of GCs is a key event in recovery of the dark state of rod photoreceptors following light exposure. May be involved in cone photoreceptor response and recovery of response in bright light. In Homo sapiens (Human), this protein is Guanylyl cyclase-activating protein 2 (GUCA1B).